The chain runs to 250 residues: ATP synthase subunit a (250 aa).

Transmembrane regions (helical) follow at residues 29–49, 84–104, 114–134, 143–163, 189–209, and 216–236; these read ASLFMVATVACAAGFLYFATS, FFPMVFSLFMFVLTANLLGMM, IVVTFALAIFVIGTVLVYGFY, LFVPSGVPGALLLLVVPIEVI, VFAGFVASLGSLGALGVGGAL, and VALTGLEFLVAFLQAYVFAVL.

The protein belongs to the ATPase A chain family. F-type ATPases have 2 components, CF(1) - the catalytic core - and CF(0) - the membrane proton channel. CF(1) has five subunits: alpha(3), beta(3), gamma(1), delta(1), epsilon(1). CF(0) has three main subunits: a(1), b(2) and c(9-12). The alpha and beta chains form an alternating ring which encloses part of the gamma chain. CF(1) is attached to CF(0) by a central stalk formed by the gamma and epsilon chains, while a peripheral stalk is formed by the delta and b chains.

The protein resides in the cell inner membrane. Functionally, key component of the proton channel; it plays a direct role in the translocation of protons across the membrane. The sequence is that of ATP synthase subunit a from Allorhizobium ampelinum (strain ATCC BAA-846 / DSM 112012 / S4) (Agrobacterium vitis (strain S4)).